Consider the following 172-residue polypeptide: Adenine phosphoribosyltransferase (172 aa).

Belongs to the purine/pyrimidine phosphoribosyltransferase family. As to quaternary structure, homodimer.

It localises to the cytoplasm. It carries out the reaction AMP + diphosphate = 5-phospho-alpha-D-ribose 1-diphosphate + adenine. Its pathway is purine metabolism; AMP biosynthesis via salvage pathway; AMP from adenine: step 1/1. Functionally, catalyzes a salvage reaction resulting in the formation of AMP, that is energically less costly than de novo synthesis. In Streptococcus uberis (strain ATCC BAA-854 / 0140J), this protein is Adenine phosphoribosyltransferase.